Reading from the N-terminus, the 94-residue chain is Acylphosphatase (94 aa).

Positions 7 to 94 (AVQARVYGRV…TAPGDFRIVA (88 aa)) constitute an Acylphosphatase-like domain. Active-site residues include Arg-22 and Asn-40.

The protein belongs to the acylphosphatase family.

It catalyses the reaction an acyl phosphate + H2O = a carboxylate + phosphate + H(+). The chain is Acylphosphatase (acyP) from Mesorhizobium japonicum (strain LMG 29417 / CECT 9101 / MAFF 303099) (Mesorhizobium loti (strain MAFF 303099)).